The primary structure comprises 239 residues: Ribosomal RNA large subunit methyltransferase E (239 aa).

Residues 1–20 (MTKAPIAGNRTGRKLGQRVK) are disordered. Residues 11–20 (TGRKLGQRVK) show a composition bias toward basic residues. Positions 81, 83, 104, 120, and 144 each coordinate S-adenosyl-L-methionine. The active-site Proton acceptor is the Lys-184.

This sequence belongs to the class I-like SAM-binding methyltransferase superfamily. RNA methyltransferase RlmE family.

The protein resides in the cytoplasm. It catalyses the reaction uridine(2552) in 23S rRNA + S-adenosyl-L-methionine = 2'-O-methyluridine(2552) in 23S rRNA + S-adenosyl-L-homocysteine + H(+). In terms of biological role, specifically methylates the uridine in position 2552 of 23S rRNA at the 2'-O position of the ribose in the fully assembled 50S ribosomal subunit. This chain is Ribosomal RNA large subunit methyltransferase E, found in Rhizobium leguminosarum bv. trifolii (strain WSM2304).